Consider the following 210-residue polypeptide: Pyridoxine/pyridoxamine 5'-phosphate oxidase (210 aa).

Substrate-binding positions include 7 to 10 and lysine 65; that span reads RQSY. FMN is bound by residues 60–65, 75–76, arginine 81, lysine 82, and glutamine 104; these read RIVLIK and YT. Tyrosine 122, arginine 126, and serine 130 together coordinate substrate. Residues 139-140 and tryptophan 182 each bind FMN; that span reads QS. 188–190 serves as a coordination point for substrate; the sequence is RLH. Arginine 192 contributes to the FMN binding site.

Belongs to the pyridoxamine 5'-phosphate oxidase family. In terms of assembly, homodimer. The cofactor is FMN.

The catalysed reaction is pyridoxamine 5'-phosphate + O2 + H2O = pyridoxal 5'-phosphate + H2O2 + NH4(+). It carries out the reaction pyridoxine 5'-phosphate + O2 = pyridoxal 5'-phosphate + H2O2. Its pathway is cofactor metabolism; pyridoxal 5'-phosphate salvage; pyridoxal 5'-phosphate from pyridoxamine 5'-phosphate: step 1/1. The protein operates within cofactor metabolism; pyridoxal 5'-phosphate salvage; pyridoxal 5'-phosphate from pyridoxine 5'-phosphate: step 1/1. Functionally, catalyzes the oxidation of either pyridoxine 5'-phosphate (PNP) or pyridoxamine 5'-phosphate (PMP) into pyridoxal 5'-phosphate (PLP). This Bordetella petrii (strain ATCC BAA-461 / DSM 12804 / CCUG 43448) protein is Pyridoxine/pyridoxamine 5'-phosphate oxidase.